Consider the following 395-residue polypeptide: GPI-anchor transamidase (395 aa).

The first 27 residues, 1 to 27 (MAVTDSLSRAATVLATVLLLSFGSVAA), serve as a signal peptide directing secretion. The Lumenal segment spans residues 28–368 (SHIEDQAEQF…PKLKDWHPPG (341 aa)). Positions 79, 82, 118, and 120 each coordinate Ca(2+). The active-site Proton donor is the His-164. Cys-206 serves as the catalytic Nucleophile; acyl-thioester intermediate. The a protein site is built by Cys-206, Ser-232, and Ser-234. The autoinhibitory loop stretch occupies residues 231–236 (DSLSHQ). A disulfide bridge connects residues Cys-275 and Cys-280. The chain crosses the membrane as a helical span at residues 369–385 (GFILGLWALIIMVFFKT). Residues 386–395 (YGIKHMKFIF) lie on the Cytoplasmic side of the membrane.

This sequence belongs to the peptidase C13 family. Heteropentamer. Part of the GPI-anchor transamidase complex, consisting of PIGK, PIGT, PIGS, PIGU and GAA1. Interacts with GPAA1. Interacts with PIGT; this interaction, via a disulfide link, stabilizes the expression of GAA1 and PIGK and links them to PIGS. The disulfide bond between PIGK/GPI8 and PIGT is important for normal enzyme activity.

The protein localises to the endoplasmic reticulum membrane. The protein operates within glycolipid biosynthesis; glycosylphosphatidylinositol-anchor biosynthesis. Its activity is regulated as follows. In the absence of proproteins substrates, exists in an inactive state with a disrupted catalytic site by an autoinhibitory loop. The binding of proprotein substrates, particularly the CSP region, to GPI-T triggers concerted conformational changes that alleviate the inhibition by the autoinhibitory loop. Meanwhile, proprotein residues near the omega- site induce the formation of a catalytic cleft for catalysis, following which the products are released and GPI-T reverts to the inactive state. In terms of biological role, catalytic subunit of the glycosylphosphatidylinositol-anchor (GPI-anchor) transamidase (GPI-T) complex that catalyzes the formation of the linkage between a proprotein and a GPI-anchor and participates in GPI anchored protein biosynthesis. Recognizes diverse proproteins at a C-terminal signal peptide (CSP) region that lacks consensus sequence and replaces it with a GPI-anchor via a transamidation reaction. Transamidation catalysis reaction follows a two-phase mechanism. In the acyl-enzyme phase, the carbonyl group of the proproteins's omega-site undergoes a nucleophilic attack forming an enzyme-substrate thioester bond. Followed by a general acid catalysis that allows CSP releasing, regenerating the carbonyl, and forming the acyl-enzyme intermediate. In the GPI-anchor attachment phase, the amino group of the GPI-anchor's ethanolamine phosphate, the one on third mannose (EtNP3), mediates a nucleophilic attack on the carbonyl of the acyl-enzyme intermediate, replacing the CSP, allowing GPI-anchor attachment to the omega-residue, therefore forming the product and freeing the enzyme. In Homo sapiens (Human), this protein is GPI-anchor transamidase.